Consider the following 270-residue polypeptide: Urease accessory protein UreD (270 aa).

It belongs to the UreD family. As to quaternary structure, ureD, UreF and UreG form a complex that acts as a GTP-hydrolysis-dependent molecular chaperone, activating the urease apoprotein by helping to assemble the nickel containing metallocenter of UreC. The UreE protein probably delivers the nickel.

Its subcellular location is the cytoplasm. Its function is as follows. Required for maturation of urease via the functional incorporation of the urease nickel metallocenter. This Beijerinckia indica subsp. indica (strain ATCC 9039 / DSM 1715 / NCIMB 8712) protein is Urease accessory protein UreD.